Reading from the N-terminus, the 408-residue chain is LL-diaminopimelate aminotransferase (408 aa).

Substrate contacts are provided by tyrosine 15 and glycine 42. Pyridoxal 5'-phosphate contacts are provided by residues tyrosine 72, 108–109 (SK), tyrosine 132, asparagine 187, tyrosine 218, and 246–248 (SFS). Substrate is bound by residues lysine 109, tyrosine 132, and asparagine 187. Position 249 is an N6-(pyridoxal phosphate)lysine (lysine 249). Residues arginine 257 and asparagine 292 each contribute to the pyridoxal 5'-phosphate site. Substrate-binding residues include asparagine 292 and arginine 388.

The protein belongs to the class-I pyridoxal-phosphate-dependent aminotransferase family. LL-diaminopimelate aminotransferase subfamily. In terms of assembly, homodimer. Pyridoxal 5'-phosphate is required as a cofactor.

The catalysed reaction is (2S,6S)-2,6-diaminopimelate + 2-oxoglutarate = (S)-2,3,4,5-tetrahydrodipicolinate + L-glutamate + H2O + H(+). It participates in amino-acid biosynthesis; L-lysine biosynthesis via DAP pathway; LL-2,6-diaminopimelate from (S)-tetrahydrodipicolinate (aminotransferase route): step 1/1. In terms of biological role, involved in the synthesis of meso-diaminopimelate (m-DAP or DL-DAP), required for both lysine and peptidoglycan biosynthesis. Catalyzes the direct conversion of tetrahydrodipicolinate to LL-diaminopimelate. The polypeptide is LL-diaminopimelate aminotransferase (Prochlorococcus marinus (strain MIT 9211)).